The primary structure comprises 480 residues: MSRVEGLTSWYSDWQGLSAAILGIGVSGFAAADSLRELGVDVTVYAPEKHTRYNKLLDAIGARYVCAYLDELCEVDVDFIVVSPGISPDNPVIKRLRDRQIPILSEIELAWRVRDKVNTCPWILITGTNGKTTTALLTGSMLAKDGARVAVCGNIGTPVLDAVRNPKGFDYFVVELSSFQLSLLPMHGNGAVKGFSSACVNLDEDHLEWHGAKELYYRAKSRVYHGTTGFCVYNLDDEETKKMVEQACVARNVRAIGFGLCVPDVGQVGIVDGILCDRAFLSARKDSALEITSVEKLEKNKLSMRHIISDVLCAVALARSVETNPLSISRALDEFCLSPHRTEVVAKEMGVMWVNDSKATNPHAVIASLSNFSRVILIFGGLMKGVDVSGIFDRFYETIKAVVVIGKNQSFVGNIKCKKIVCIPDSNDPMSEAVAAADLLATPGDTVLLSPGGSSFDQFESYEHRGNCFINAVKDLVKRK.

127–133 (GTNGKTT) serves as a coordination point for ATP.

It belongs to the MurCDEF family.

The protein localises to the cytoplasm. The enzyme catalyses UDP-N-acetyl-alpha-D-muramoyl-L-alanine + D-glutamate + ATP = UDP-N-acetyl-alpha-D-muramoyl-L-alanyl-D-glutamate + ADP + phosphate + H(+). The protein operates within cell wall biogenesis; peptidoglycan biosynthesis. Its function is as follows. Cell wall formation. Catalyzes the addition of glutamate to the nucleotide precursor UDP-N-acetylmuramoyl-L-alanine (UMA). In Tropheryma whipplei (strain TW08/27) (Whipple's bacillus), this protein is UDP-N-acetylmuramoylalanine--D-glutamate ligase.